The primary structure comprises 285 residues: Gas vesicle protein C2 (285 aa).

Repeat copies occupy residues 22–52, 53–84, 85–122, 123–155, 156–188, and 189–220. The segment at 22 to 220 is 6 X approximate tandem repeats; sequence EAMDAYAEEF…ADDTTAQTDV (199 aa).

Belongs to the halobacterial gas vesicle GvpC family.

It localises to the gas vesicle. Functionally, confers stability, involved in shaping gas vesicles (GV), hollow, gas filled proteinaceous nanostructures. GVs allow positioning of halobacteria at an optimal depth for growth in the poorly aerated, shallow brine pools of their habitat. In terms of biological role, expression of 2 c-vac DNA fragments containing 2 divergently transcribed regions (gvpE-gvpF-gvpG-gvpH-gvpI-gvpJ-gvpK-gvpL-gvpM and gvpA-gvpC-gvpN-gvpO) allows H.volcanii to produce gas vesicles. This is Gas vesicle protein C2 from Halobacterium salinarum (strain ATCC 700922 / JCM 11081 / NRC-1) (Halobacterium halobium).